The primary structure comprises 313 residues: Platelet glycoprotein VI (313 aa).

Residues methionine 1–threonine 21 form the signal peptide. The Extracellular segment spans residues glutamine 22 to lysine 265. Ig-like C2-type domains follow at residues proline 27–glutamate 105 and proline 115–aspartate 197. A disulfide bridge links cysteine 49 with cysteine 89. Residue asparagine 93 is glycosylated (N-linked (GlcNAc...) asparagine). Cysteine 135 and cysteine 181 are disulfide-bonded. The segment at valine 213–isoleucine 236 is disordered. An N-linked (GlcNAc...) asparagine glycan is attached at asparagine 244. A helical transmembrane segment spans residues glycine 266–alanine 286. Topologically, residues glutamate 287–alanine 313 are cytoplasmic.

Associated with Fc receptor gamma chain. The GPVI:FcRgamma complex is associated with the Src kinase family FYN and LYN. Interacts with TRAF4. Interacts with COL1A1, but not with COL4A4. In terms of tissue distribution, megakaryocytes and platelets.

It is found in the cell membrane. In terms of biological role, collagen receptor involved in collagen-induced platelet adhesion and activation. Plays a key role in platelet procoagulant activity and subsequent thrombin and fibrin formation. This procoagulant function may contribute to arterial and venous thrombus formation. The signaling pathway involves the FcR gamma-chain, the Src kinases (likely FYN or LYN) and SYK, the adapter protein LAT and leads to the activation of PLCG2. This is Platelet glycoprotein VI from Mus musculus (Mouse).